A 186-amino-acid chain; its full sequence is TATA-box-binding protein (186 aa).

Tandem repeats lie at residues 10–86 (IENV…FDKL) and 101–179 (VQNI…VERL).

The protein belongs to the TBP family.

General factor that plays a role in the activation of archaeal genes transcribed by RNA polymerase. Binds specifically to the TATA box promoter element which lies close to the position of transcription initiation. This chain is TATA-box-binding protein, found in Haloarcula marismortui (strain ATCC 43049 / DSM 3752 / JCM 8966 / VKM B-1809) (Halobacterium marismortui).